A 326-amino-acid polypeptide reads, in one-letter code: Glyceraldehyde-3-phosphate dehydrogenase, cytosolic (326 aa).

NAD(+)-binding positions include 2–3, Asp-24, and Arg-71; that span reads RI. D-glyceraldehyde 3-phosphate contacts are provided by residues 142–144, Thr-173, 202–203, and Arg-225; these read SCT and TG. Cys-143 (nucleophile) is an active-site residue. NAD(+) is bound at residue Asn-307.

Belongs to the glyceraldehyde-3-phosphate dehydrogenase family.

The protein localises to the cytoplasm. It catalyses the reaction D-glyceraldehyde 3-phosphate + phosphate + NAD(+) = (2R)-3-phospho-glyceroyl phosphate + NADH + H(+). It functions in the pathway carbohydrate degradation; glycolysis; pyruvate from D-glyceraldehyde 3-phosphate: step 1/5. Its function is as follows. Key enzyme in glycolysis that catalyzes the first step of the pathway by converting D-glyceraldehyde 3-phosphate (G3P) into 3-phospho-D-glyceroyl phosphate. Essential for the maintenance of cellular ATP levels and carbohydrate metabolism. This is Glyceraldehyde-3-phosphate dehydrogenase, cytosolic (GAPC) from Nicotiana tabacum (Common tobacco).